The primary structure comprises 230 residues: UPF0173 metal-dependent hydrolase LI0883 (230 aa).

This sequence belongs to the UPF0173 family.

The sequence is that of UPF0173 metal-dependent hydrolase LI0883 from Lawsonia intracellularis (strain PHE/MN1-00).